The following is an 87-amino-acid chain: Antitoxin RelB1 (87 aa).

Antitoxin component of a type II toxin-antitoxin (TA) system. Neutralizes the effect of cognate toxin RelE1, but no other RelE or ParE toxin. In Caulobacter vibrioides (strain ATCC 19089 / CIP 103742 / CB 15) (Caulobacter crescentus), this protein is Antitoxin RelB1 (relB1).